The following is a 126-amino-acid chain: Spermidine export protein MdtJ (126 aa).

The next 4 membrane-spanning stretches (helical) occupy residues 1-21 (MMIY…GTLS), 32-52 (TGHI…ALAV), 55-75 (VALG…ITVF), and 82-102 (ESLS…IMLV). The tract at residues 104 to 126 (SGTRKPKKPNSPNRNSGEHHATA) is disordered.

It belongs to the drug/metabolite transporter (DMT) superfamily. Small multidrug resistance (SMR) (TC 2.A.7.1) family. MdtJ subfamily. Forms a complex with MdtI.

It localises to the cell inner membrane. Functionally, catalyzes the excretion of spermidine. This chain is Spermidine export protein MdtJ, found in Yersinia enterocolitica serotype O:8 / biotype 1B (strain NCTC 13174 / 8081).